Reading from the N-terminus, the 257-residue chain is Type III pantothenate kinase (257 aa).

5-12 (DIGNTNIK) contributes to the ATP binding site. 107-110 (GSDR) provides a ligand contact to substrate. The Proton acceptor role is filled by aspartate 109. Position 133 (threonine 133) interacts with ATP.

This sequence belongs to the type III pantothenate kinase family. Homodimer. It depends on NH4(+) as a cofactor. K(+) serves as cofactor.

The protein resides in the cytoplasm. It carries out the reaction (R)-pantothenate + ATP = (R)-4'-phosphopantothenate + ADP + H(+). Its pathway is cofactor biosynthesis; coenzyme A biosynthesis; CoA from (R)-pantothenate: step 1/5. Functionally, catalyzes the phosphorylation of pantothenate (Pan), the first step in CoA biosynthesis. The protein is Type III pantothenate kinase of Ehrlichia ruminantium (strain Gardel).